Reading from the N-terminus, the 466-residue chain is Histidine--tRNA ligase (466 aa).

This sequence belongs to the class-II aminoacyl-tRNA synthetase family. As to quaternary structure, homodimer.

Its subcellular location is the cytoplasm. The enzyme catalyses tRNA(His) + L-histidine + ATP = L-histidyl-tRNA(His) + AMP + diphosphate + H(+). This Xylella fastidiosa (strain M23) protein is Histidine--tRNA ligase.